The primary structure comprises 67 residues: Protein AaeX (67 aa).

2 helical membrane-spanning segments follow: residues 3-23 and 39-59; these read LLPVMVIFGLSFPPIFLELLI and GIYEFVWHPALFNTALYCCLF.

This sequence belongs to the AaeX family.

The protein localises to the cell membrane. This is Protein AaeX from Yersinia pseudotuberculosis serotype O:1b (strain IP 31758).